The primary structure comprises 385 residues: 8-amino-7-oxononanoate synthase (385 aa).

Substrate is bound at residue R21. 108 to 109 is a binding site for pyridoxal 5'-phosphate; sequence GF. H133 serves as a coordination point for substrate. Pyridoxal 5'-phosphate is bound by residues S179, H207, and T233. K236 is subject to N6-(pyridoxal phosphate)lysine. T352 lines the substrate pocket.

Belongs to the class-II pyridoxal-phosphate-dependent aminotransferase family. BioF subfamily. As to quaternary structure, homodimer. Pyridoxal 5'-phosphate serves as cofactor.

The catalysed reaction is 6-carboxyhexanoyl-[ACP] + L-alanine + H(+) = (8S)-8-amino-7-oxononanoate + holo-[ACP] + CO2. The protein operates within cofactor biosynthesis; biotin biosynthesis. Catalyzes the decarboxylative condensation of pimeloyl-[acyl-carrier protein] and L-alanine to produce 8-amino-7-oxononanoate (AON), [acyl-carrier protein], and carbon dioxide. In Salmonella arizonae (strain ATCC BAA-731 / CDC346-86 / RSK2980), this protein is 8-amino-7-oxononanoate synthase.